Reading from the N-terminus, the 432-residue chain is MQVTVETLEGLERRLNITVPAANIEDAVTAELRNIAKNRRFDGFRKGKVPMKMVAKMYGKAVRQDILGEVMQRHFIEAIIKEKINPAGAPTFAPVENKEGSDLVFNATFEVYPEVELKGLENITVEKPAVEVKDADVEEMIETLRKQQATWTEVEEAAEAGKRVSIDFVGSIDGEEFEGGKAENFPLEMGAGRMIPGFEDGIEGKTKGMEFEIDVTFPEDYHAENLKGKAAKFAIKVNKVEARQLPELNDEFVAKFGVAEGGIDALKAEVRKNMERELKQAVKNRIKEQAIDGLVKENEIDVPAALIDQEINVLRQQAAQRFGGNVEAAMQLPRELFEEQAKRRVVVGLLLGEVIKAHELKVDEEKVKAIITEMATAYEDPTEVVTYYEQNEQMMNNMRNVALEEQAIDAIIAKAQVSEKEVSFNELMNQPA.

The 86-residue stretch at 161 to 246 (GKRVSIDFVG…VNKVEARQLP (86 aa)) folds into the PPIase FKBP-type domain.

Belongs to the FKBP-type PPIase family. Tig subfamily.

The protein localises to the cytoplasm. It catalyses the reaction [protein]-peptidylproline (omega=180) = [protein]-peptidylproline (omega=0). In terms of biological role, involved in protein export. Acts as a chaperone by maintaining the newly synthesized protein in an open conformation. Functions as a peptidyl-prolyl cis-trans isomerase. This is Trigger factor from Vibrio vulnificus (strain YJ016).